Reading from the N-terminus, the 207-residue chain is Uracil phosphoribosyltransferase (207 aa).

5-phospho-alpha-D-ribose 1-diphosphate-binding positions include Arg-77, Arg-102, and 129 to 137 (DPMLATGGS). Uracil-binding positions include Ile-192 and 197–199 (GDA). Asp-198 contributes to the 5-phospho-alpha-D-ribose 1-diphosphate binding site.

The protein belongs to the UPRTase family. Requires Mg(2+) as cofactor.

The enzyme catalyses UMP + diphosphate = 5-phospho-alpha-D-ribose 1-diphosphate + uracil. Its pathway is pyrimidine metabolism; UMP biosynthesis via salvage pathway; UMP from uracil: step 1/1. Allosterically activated by GTP. Functionally, catalyzes the conversion of uracil and 5-phospho-alpha-D-ribose 1-diphosphate (PRPP) to UMP and diphosphate. This Dictyoglomus turgidum (strain DSM 6724 / Z-1310) protein is Uracil phosphoribosyltransferase.